Here is a 520-residue protein sequence, read N- to C-terminus: D-aminopeptidase (520 aa).

The active-site Nucleophile is the S62. The active-site Proton donor/acceptor is K65. The segment at 477–487 (QRSMDAPSPGE) is important for specificity. D481 contacts substrate.

It belongs to the peptidase S12 family. As to quaternary structure, homodimer.

It carries out the reaction Release of an N-terminal D-amino acid from a peptide, Xaa-|-Yaa-, in which Xaa is preferably D-Ala, D-Ser or D-Thr. D-amino acid amides and methyl esters also are hydrolyzed, as is glycine amide.. With respect to regulation, inhibited by beta-lactam compounds such as 6-aminopenicillic acid, 7-aminocephalosporanic acid, benzylpenicillin and ampicillin. Inhibited by p-chloromercuribenzoate. Functionally, hydrolyzes N-terminal residues in D-amino acid-containing peptides. In Brucella anthropi (strain ATCC 49188 / DSM 6882 / CCUG 24695 / JCM 21032 / LMG 3331 / NBRC 15819 / NCTC 12168 / Alc 37) (Ochrobactrum anthropi), this protein is D-aminopeptidase.